The chain runs to 272 residues: Magnetosome protein MamQ 1 (272 aa).

Residues 1 to 46 are Cytoplasmic-facing; that stretch reads MALGDANVGSAPGVDFSALQRVKQSEELLAQLYVVEETPRRLGRGP. A helical transmembrane segment spans residues 47–67; sequence VHALMVISVLSVVAFIATLLM. Topologically, residues 68 to 272 are lumenal; it reads RYNTFVTMSE…PLNHAQDIKK (205 aa).

Belongs to the LemA family.

The protein localises to the magnetosome membrane. Essential for magnetosome formation. Can be used to induce magnetosome formation. This chain is Magnetosome protein MamQ 1 (mamQ1), found in Paramagnetospirillum magneticum (strain ATCC 700264 / AMB-1) (Magnetospirillum magneticum).